The primary structure comprises 53 residues: uncharacterized protein (53 aa).

This is an uncharacterized protein from Bacillus subtilis (strain 168).